The following is a 607-amino-acid chain: Rap1 GTPase-GDP dissociation stimulator 1 (607 aa).

The short motif at 4–13 is the Nuclear export signal (NES) element; it reads LSDTLKKLKI. 2 ARM repeats span residues 89 to 131 and 170 to 211; these read GLIS…DQAG and DSLQ…NLAE. A prevents binding to prenylated RHOA region spans residues 122 to 170; the sequence is EGRSAVDQAGGAQIVIDHLRSLCSITDPANEKLLTVFCGMLMNYSNEND. Residue K230 is modified to N6-acetyllysine. The interacts with polybasic regions in GTPases stretch occupies residues 239–255; sequence DKREMIFEVLAPLAEND. ARM repeat units lie at residues 347-390, 391-431, and 479-519; these read DANC…NLAI, PVIN…MLID, and SKDV…LIAA. The segment at 379–428 is critical for catalytic activity; that stretch reads HAALSALRNLAIPVINKAKMLSAGVTEAVLKFLKSEMPPVQFKLLGTLRM.

In terms of assembly, interacts with RABL3. Interacts with RHOT1. As to quaternary structure, interacts with unprenylated RHOA; the interaction is direct. Interacts with RAP1A. Interacts with KRAS. Interacts with RAC1. Interacts with RAP1B. Preferentially interacts with unprenylated GTPases that will become geranylgeranylated. May also interact with prenylated GTPases. Interacts with prenylated RHOA; the interaction is direct and in a 1:1 stoichiometry. Interacts with RAP1A. Interacts with KRAS. Interacts with RAC1. Interacts with RAP1B. Preferentially interacts with prenylated GTPases. In terms of processing, forms covalent cross-links mediated by transglutaminase TGM2, between a glutamine and the epsilon-amino group of a lysine residue, forming homopolymers and heteropolymers.

Its subcellular location is the cytoplasm. It localises to the cytosol. The protein localises to the endoplasmic reticulum. The protein resides in the mitochondrion. It is found in the nucleus. In terms of biological role, acts as a GEF (guanine nucleotide exchange factor) for the Rho family of small GTP-binding proteins (G proteins) that stimulates the dissociation of GDP to enable subsequent binding of GTP. Additionally, appears to chaperone the processing and/or trafficking of small GTPases containing a C-terminal polybasic region independently of GEF activity. Targets include RAP1A/RAP1B, RHOA, RHOB, RHOC, RAC1 and KRAS. Regulates mitochondrial dynamics by controlling RHOT function to promote mitochondrial fission during high calcium conditions. Able to promote the Ca(2+) release from the endoplasmic reticulum via both inositol trisphosphate (Ins3P) and ryanodine sensitive receptors leading to a enhanced mitochondrial Ca(2+) uptake. Acts as a GEF (guanine nucleotide exchange factor) for unprenylated RHOA. Chaperones the entry and passage of small GTPases through the prenylation pathway. Recognizes the last amino acid in the GTPase C-terminal CAAX motif with a preference for 'Leu' over 'Met', indicating involvement in the geranylgeranylation pathway. Its function is as follows. Acts as a GEF (guanine nucleotide exchange factor) for prenylated RHOA. Acts as a GEF for RHOC. Chaperones the downstream trafficking and/or processing of small newly prenylated GTPases. Escorts RAC1 to the nucleus. The polypeptide is Rap1 GTPase-GDP dissociation stimulator 1 (Homo sapiens (Human)).